A 138-amino-acid polypeptide reads, in one-letter code: ATP synthase epsilon chain (138 aa).

Belongs to the ATPase epsilon chain family. In terms of assembly, F-type ATPases have 2 components, CF(1) - the catalytic core - and CF(0) - the membrane proton channel. CF(1) has five subunits: alpha(3), beta(3), gamma(1), delta(1), epsilon(1). CF(0) has three main subunits: a, b and c.

It is found in the cell membrane. Functionally, produces ATP from ADP in the presence of a proton gradient across the membrane. The protein is ATP synthase epsilon chain of Streptococcus equinus (Streptococcus bovis).